The chain runs to 605 residues: Elongation factor 4 (605 aa).

Positions 11–193 constitute a tr-type G domain; sequence KNIRNFSIIA…TLVDVIPAPT (183 aa). GTP-binding positions include 23–28 and 140–143; these read DHGKST and NKID.

It belongs to the TRAFAC class translation factor GTPase superfamily. Classic translation factor GTPase family. LepA subfamily.

It is found in the cell inner membrane. The catalysed reaction is GTP + H2O = GDP + phosphate + H(+). Functionally, required for accurate and efficient protein synthesis under certain stress conditions. May act as a fidelity factor of the translation reaction, by catalyzing a one-codon backward translocation of tRNAs on improperly translocated ribosomes. Back-translocation proceeds from a post-translocation (POST) complex to a pre-translocation (PRE) complex, thus giving elongation factor G a second chance to translocate the tRNAs correctly. Binds to ribosomes in a GTP-dependent manner. The protein is Elongation factor 4 of Acinetobacter baumannii (strain AB307-0294).